Reading from the N-terminus, the 233-residue chain is tRNA (guanine-N(7)-)-methyltransferase (233 aa).

The disordered stretch occupies residues 1 to 22 (MIDENHPMRAAGNFFGRRHGKP). Glutamate 64, glutamate 89, aspartate 116, and aspartate 138 together coordinate S-adenosyl-L-methionine. Aspartate 138 is a catalytic residue. Substrate contacts are provided by residues lysine 142, aspartate 174, and 212 to 215 (TRYE).

The protein belongs to the class I-like SAM-binding methyltransferase superfamily. TrmB family.

It catalyses the reaction guanosine(46) in tRNA + S-adenosyl-L-methionine = N(7)-methylguanosine(46) in tRNA + S-adenosyl-L-homocysteine. Its pathway is tRNA modification; N(7)-methylguanine-tRNA biosynthesis. In terms of biological role, catalyzes the formation of N(7)-methylguanine at position 46 (m7G46) in tRNA. This Brucella abortus (strain 2308) protein is tRNA (guanine-N(7)-)-methyltransferase.